Reading from the N-terminus, the 137-residue chain is Small heat shock protein IbpA (137 aa).

The sHSP domain maps to 28 to 137 (SQSNGGYPPY…ANKPRRIEIN (110 aa)).

Belongs to the small heat shock protein (HSP20) family. In terms of assembly, monomer. Forms homomultimers of about 100-150 subunits at optimal growth temperatures. Conformation changes to monomers at high temperatures or high ionic concentrations.

It is found in the cytoplasm. Its function is as follows. Associates with aggregated proteins, together with IbpB, to stabilize and protect them from irreversible denaturation and extensive proteolysis during heat shock and oxidative stress. Aggregated proteins bound to the IbpAB complex are more efficiently refolded and reactivated by the ATP-dependent chaperone systems ClpB and DnaK/DnaJ/GrpE. Its activity is ATP-independent. The chain is Small heat shock protein IbpA from Klebsiella pneumoniae (strain 342).